The chain runs to 353 residues: Photosystem II D2 protein (353 aa).

Thr-2 carries the N-acetylthreonine modification. Phosphothreonine is present on Thr-2. Residues 41–61 (CAYFAVGGWFTGTTFVTSWYT) form a helical membrane-spanning segment. His-118 is a binding site for chlorophyll a. A helical transmembrane segment spans residues 125–141 (GFMLRQFELARSVQLRP). Residues Gln-130 and Asn-143 each coordinate pheophytin a. A helical membrane pass occupies residues 153–166 (VFVSVFLIYPLGQS). His-198 contributes to the chlorophyll a binding site. Residues 208 to 228 (AALLCAIHGATVENTLFEDGD) form a helical membrane-spanning segment. A plastoquinone-binding residues include His-215 and Phe-262. A Fe cation-binding site is contributed by His-215. His-269 contacts Fe cation. The helical transmembrane segment at 279-295 (GLWMSALGVVGLALNLR) threads the bilayer.

Belongs to the reaction center PufL/M/PsbA/D family. As to quaternary structure, PSII is composed of 1 copy each of membrane proteins PsbA, PsbB, PsbC, PsbD, PsbE, PsbF, PsbH, PsbI, PsbJ, PsbK, PsbL, PsbM, PsbT, PsbX, PsbY, PsbZ, Psb30/Ycf12, at least 3 peripheral proteins of the oxygen-evolving complex and a large number of cofactors. It forms dimeric complexes. The D1/D2 heterodimer binds P680, chlorophylls that are the primary electron donor of PSII, and subsequent electron acceptors. It shares a non-heme iron and each subunit binds pheophytin, quinone, additional chlorophylls, carotenoids and lipids. There is also a Cl(-1) ion associated with D1 and D2, which is required for oxygen evolution. The PSII complex binds additional chlorophylls, carotenoids and specific lipids. serves as cofactor.

The protein resides in the plastid. It localises to the chloroplast thylakoid membrane. It catalyses the reaction 2 a plastoquinone + 4 hnu + 2 H2O = 2 a plastoquinol + O2. Functionally, photosystem II (PSII) is a light-driven water:plastoquinone oxidoreductase that uses light energy to abstract electrons from H(2)O, generating O(2) and a proton gradient subsequently used for ATP formation. It consists of a core antenna complex that captures photons, and an electron transfer chain that converts photonic excitation into a charge separation. The D1/D2 (PsbA/PsbD) reaction center heterodimer binds P680, the primary electron donor of PSII as well as several subsequent electron acceptors. D2 is needed for assembly of a stable PSII complex. The polypeptide is Photosystem II D2 protein (Jasminum nudiflorum (Winter jasmine)).